The following is a 475-amino-acid chain: Siroheme synthase (475 aa).

Positions 1–204 (MDYLPVFLNI…GRDQAAQDYL (204 aa)) are precorrin-2 dehydrogenase /sirohydrochlorin ferrochelatase. NAD(+) contacts are provided by residues 22-23 (EI) and 43-44 (PA). Position 129 is a phosphoserine (Ser-129). The segment at 218–475 (GEVYLVGAGP…MGTSSGPGYP (258 aa)) is uroporphyrinogen-III C-methyltransferase. S-adenosyl-L-methionine is bound at residue Pro-227. Asp-250 functions as the Proton acceptor in the catalytic mechanism. Catalysis depends on Lys-272, which acts as the Proton donor. S-adenosyl-L-methionine contacts are provided by residues 303 to 305 (GGD), Ile-308, 333 to 334 (TA), Met-385, and Gly-414.

The protein in the N-terminal section; belongs to the precorrin-2 dehydrogenase / sirohydrochlorin ferrochelatase family. This sequence in the C-terminal section; belongs to the precorrin methyltransferase family.

The enzyme catalyses uroporphyrinogen III + 2 S-adenosyl-L-methionine = precorrin-2 + 2 S-adenosyl-L-homocysteine + H(+). It carries out the reaction precorrin-2 + NAD(+) = sirohydrochlorin + NADH + 2 H(+). It catalyses the reaction siroheme + 2 H(+) = sirohydrochlorin + Fe(2+). The protein operates within cofactor biosynthesis; adenosylcobalamin biosynthesis; precorrin-2 from uroporphyrinogen III: step 1/1. It participates in cofactor biosynthesis; adenosylcobalamin biosynthesis; sirohydrochlorin from precorrin-2: step 1/1. It functions in the pathway porphyrin-containing compound metabolism; siroheme biosynthesis; precorrin-2 from uroporphyrinogen III: step 1/1. Its pathway is porphyrin-containing compound metabolism; siroheme biosynthesis; siroheme from sirohydrochlorin: step 1/1. The protein operates within porphyrin-containing compound metabolism; siroheme biosynthesis; sirohydrochlorin from precorrin-2: step 1/1. Its function is as follows. Multifunctional enzyme that catalyzes the SAM-dependent methylations of uroporphyrinogen III at position C-2 and C-7 to form precorrin-2 via precorrin-1. Then it catalyzes the NAD-dependent ring dehydrogenation of precorrin-2 to yield sirohydrochlorin. Finally, it catalyzes the ferrochelation of sirohydrochlorin to yield siroheme. The polypeptide is Siroheme synthase (Nitrosomonas europaea (strain ATCC 19718 / CIP 103999 / KCTC 2705 / NBRC 14298)).